Here is a 621-residue protein sequence, read N- to C-terminus: Chaperone protein HtpG (621 aa).

The segment at 1-325 (MTDASVKETF…SQDLSLNVSR (325 aa)) is a; substrate-binding. The b stretch occupies residues 326 to 541 (EMLQSDPKLA…EGDIDVNLER (216 aa)). The segment at 542-621 (MLKRHGQLQD…RLGSVMDSAL (80 aa)) is c.

This sequence belongs to the heat shock protein 90 family. As to quaternary structure, homodimer.

Its subcellular location is the cytoplasm. Functionally, molecular chaperone. Has ATPase activity. In Roseobacter denitrificans (strain ATCC 33942 / OCh 114) (Erythrobacter sp. (strain OCh 114)), this protein is Chaperone protein HtpG.